The following is an 85-amino-acid chain: Dual endothelin-1/VEGF signal peptide receptor (85 aa).

Residues 1–18 (MTMFKGSNEMKSRWNWGS) are Extracellular-facing. The chain crosses the membrane as a helical span at residues 19–37 (ITCIICFTCVGSQLSMSSS). Over 38–85 (KASNFSGPLQLYQRELEIFIVLTDVPNYRLIKENSHLHTTIVDQGRTV) the chain is Cytoplasmic.

N-glycosylated. Expressed in kidney. Expressed in endothelial cells.

The protein resides in the cell membrane. In terms of biological role, dual receptor for both endothelin-1 and the signal sequence of vascular endothelial growth factor A. Does not act as a receptor for angiotensin-2. Does not bind the VEGFA mature protein. May play a role in angiogenesis with a significant role in cardiovascular and neural development. The polypeptide is Dual endothelin-1/VEGF signal peptide receptor (Homo sapiens (Human)).